The chain runs to 192 residues: Potassium channel HX13_20290 (192 aa).

The chain crosses the membrane as a helical span at residues 1 to 24; it reads MTKGRLEAFSDGVLAIIITIMVLE. The RxxxFSD motif motif lies at 5 to 11; sequence RLEAFSD. A topological domain (cytoplasmic) is located at residue Leu25. A short helix H1 region spans residues 26–29; that stretch reads KVPE. At 26–39 the chain is on the extracellular side; that stretch reads KVPEGSSWASLQPI. A short helix H2 region spans residues 31–37; that stretch reads SSWASLQ. The chain crosses the membrane as a helical span at residues 40-65; sequence LPRFLAYIFSFIYVGIYWNNHHHLFQ. Over 66–71 the chain is Cytoplasmic; it reads TVKKVN. The helical transmembrane segment at 72 to 93 threads the bilayer; that stretch reads GSILWANLHLLFWLSLMPIATE. Topologically, residues 94–101 are extracellular; that stretch reads WIGTSHFA. A helical membrane pass occupies residues 102 to 126; it reads QNPVATYGIGLIMSAIAYTILENVI. Residues 127–133 are Cytoplasmic-facing; the sequence is IRCEGEN. A helical membrane pass occupies residues 134–162; it reads SKLKEAIHSKFKEYISIIFYVLGIATSFF. Over 163-164 the chain is Extracellular; the sequence is YP. The helical transmembrane segment at 165-180 threads the bilayer; it reads YIAIGFYYLVALIWLI. Topologically, residues 181 to 192 are cytoplasmic; it reads PDKRIEKSLKEN.

This sequence belongs to the TMEM175 family. In terms of assembly, homotetramer.

The protein resides in the membrane. It catalyses the reaction K(+)(in) = K(+)(out). In terms of biological role, potassium channel. The protein is Potassium channel HX13_20290 of Chryseobacterium sp. (strain P1-3).